The primary structure comprises 356 residues: Carbohydrate sulfotransferase 10 (356 aa).

The Cytoplasmic portion of the chain corresponds to M1–L6. The helical; Signal-anchor for type II membrane protein transmembrane segment at L7–L27 threads the bilayer. The Lumenal portion of the chain corresponds to T28–N356. N99 carries N-linked (GlcNAc...) asparagine glycosylation. Residues P127 to Q133 and R189 to S197 each bind 3'-phosphoadenylyl sulfate. Residues N228 and N316 are each glycosylated (N-linked (GlcNAc...) asparagine).

The protein belongs to the sulfotransferase 2 family.

It localises to the golgi apparatus membrane. The enzyme catalyses 3-O-{beta-D-GlcA-(1-&gt;[3)-alpha-D-Xyl-(1-&gt;3)-beta-D-GlcA-(1-&gt;](n)-4)-beta-D-Xyl-(1-&gt;4)-Rib-ol-P-Rib-ol-P-3-beta-D-GalNAc-(1-&gt;3)-beta-D-GlcNAc-(1-&gt;4)-O-6-P-alpha-D-Man}-L-Thr-[protein] + 3'-phosphoadenylyl sulfate = 3-O-{O-3-S-beta-D-GlcA-(1-&gt;[3)-alpha-D-Xyl-(1-&gt;3)-beta-D-GlcA-(1-&gt;](n)-4)-beta-D-Xyl-(1-&gt;4)-Rib-ol-P-Rib-ol-P-3-beta-D-GalNAc-(1-&gt;3)-beta-D-GlcNAc-(1-&gt;4)-O-6-P-alpha-D-Man}-L-Thr-[protein] + adenosine 3',5'-bisphosphate + H(+). It carries out the reaction 17beta-estradiol 3-O-(beta-D-glucuronate) + 3'-phosphoadenylyl sulfate = 17beta-estradiol 3-O-(3-sulfo-beta-D-glucuronate) + adenosine 3',5'-bisphosphate + H(+). It catalyses the reaction 17beta-estradiol 3-O-(beta-D-glucuronate) 17-sulfate + 3'-phosphoadenylyl sulfate = 17beta-estradiol 3-O-(3-sulfo-beta-D-glucuronate) 17-sulfate + adenosine 3',5'-bisphosphate + H(+). The catalysed reaction is 17beta-estradiol 17-O-(beta-D-glucuronate) + 3'-phosphoadenylyl sulfate = 17beta-estradiol 17-O-(3-sulfo-beta-D-glucuronate) + adenosine 3',5'-bisphosphate + H(+). The enzyme catalyses 16alpha,17beta-estriol 3-O-(beta-D-glucuronate) + 3'-phosphoadenylyl sulfate = 16alpha,17beta-estriol 3-O-(3-sulfo-beta-D-glucuronate) + adenosine 3',5'-bisphosphate + H(+). It carries out the reaction 16alpha,17beta-estriol 16-O-(beta-D-glucuronate) + 3'-phosphoadenylyl sulfate = 16alpha,17beta-estriol 16-O-(3-sulfo-beta-D-glucuronate) + adenosine 3',5'-bisphosphate + H(+). It catalyses the reaction 16alpha,17beta-estriol 17-O-(beta-D-glucuronate) + 3'-phosphoadenylyl sulfate = 16alpha,17beta-estriol 17-O-(3-sulfo-beta-D-glucuronate) + adenosine 3',5'-bisphosphate + H(+). The catalysed reaction is estrone 3-O-(beta-D-glucuronate) + 3'-phosphoadenylyl sulfate = estrone 3-O-(3-sulfo-beta-D-glucuronate) + adenosine 3',5'-bisphosphate + H(+). The enzyme catalyses 3alpha,20alpha-dihydroxy-5beta-pregnane 3-O-(beta-D-glucuronate) + 3'-phosphoadenylyl sulfate = 3alpha,20alpha-dihydroxy-5beta-pregnane 3-O-(3-sulfo-beta-D-glucuronate) + adenosine 3',5'-bisphosphate + H(+). It carries out the reaction testosterone 17-O-(beta-D-glucuronate) + 3'-phosphoadenylyl sulfate = testosterone 17-O-(3-sulfo-beta-D-glucuronate) + adenosine 3',5'-bisphosphate + H(+). It catalyses the reaction 3beta-androst-5-en-17-one 3-O-(beta-D-glucuronate) + 3'-phosphoadenylyl sulfate = 3beta-androst-5-en-17-one 3-O-(3-sulfo-beta-D-glucuronate) + adenosine 3',5'-bisphosphate + H(+). The catalysed reaction is 3alpha,17alpha-dihydroxy-5beta-androstane-11-one-17beta-carboxylate 3-O-(beta-D-glucuronate) + 3'-phosphoadenylyl sulfate = 3alpha,17alpha-dihydroxy-5beta-androstane-11-one-17beta-carboxylate 3-O-(3-sulfo-beta-D-glucuronate) + adenosine 3',5'-bisphosphate + H(+). The enzyme catalyses 3alpha-hydroxyetiocholan-17-one 3-O-(beta-D-glucuronate) + 3'-phosphoadenylyl sulfate = 3alpha-hydroxyetiocholan-17-one 3-O-(3-sulfo-beta-D-glucuronate) + adenosine 3',5'-bisphosphate + H(+). It participates in steroid metabolism. It functions in the pathway protein modification; carbohydrate sulfation. In terms of biological role, catalyzes the transfer of sulfate from 3'-phosphoadenylyl sulfate (PAPS) to position 3 of terminal glucuronic acid of both protein- and lipid-linked oligosaccharides. Participates in biosynthesis of HNK-1 carbohydrate structure 3-O-sulfo-beta-D-GlcA-(1-&gt;3)-beta-D-Gal-(1-&gt;4)-D-GlcNAc-R, a sulfated glucuronyl-lactosaminyl residue carried by many neural recognition molecules, which is involved in cell interactions during ontogenetic development and in synaptic plasticity in the adult. May be indirectly involved in synapse plasticity of the hippocampus, via its role in HNK-1 biosynthesis. Sulfates terminal glucuronyl residue of the laminin globular (LG)-domain binding epitope on DAG1/alpha-dystroglycan and prevents further polymerization by LARGE1 glycosyltransferase. Likely defines the chain length of LG epitope, conferring binding specificity to extracellular matrix components. Plays a role in down-regulating the steroid hormones. Sulfates glucuronidated estrogens and androgens with an impact in hormone cycle and fertility. Has a preference for glucuronyl moiety at the 3-hydroxyl group of a sterol ring rather than the 17-hydroxyl group, showing high catalytic efficiency for 17beta-estradiol 3-O-(beta-D-glucuronate) and dehydroepiandrosterone 3-O-(beta-D-glucuronate) hormones. The protein is Carbohydrate sulfotransferase 10 (CHST10) of Pongo abelii (Sumatran orangutan).